Consider the following 133-residue polypeptide: Putative N-acetylgalactosamine permease IIC component 2 (133 aa).

Residues 1–2 lie on the Cytoplasmic side of the membrane; sequence ME. Residues 1-133 form the PTS EIIC type-4 domain; it reads MEISLLQAFA…CDLATNPRRI (133 aa). A helical transmembrane segment spans residues 3-23; the sequence is ISLLQAFALGIIAFIAGLDMF. The Periplasmic segment spans residues 24–32; sequence NGLTHMHRP. A helical transmembrane segment spans residues 33-53; that stretch reads VVLGPLVGLVLGDLHTGILTG. The Cytoplasmic segment spans residues 54–65; it reads GTLELVWMGLAP. A helical transmembrane segment spans residues 66 to 86; it reads LAGAQPPNVIIGTIVGTAFAI. The Periplasmic segment spans residues 87 to 93; the sequence is TTGVKPD. A helical transmembrane segment spans residues 94-114; that stretch reads VAVGVAVPFAVAVQMGITFLF. Topologically, residues 115-133 are cytoplasmic; sequence SVMSGVMSRCDLATNPRRI.

The protein localises to the cell inner membrane. Its function is as follows. The phosphoenolpyruvate-dependent sugar phosphotransferase system (PTS), a major carbohydrate active -transport system, catalyzes the phosphorylation of incoming sugar substrates concomitant with their translocation across the cell membrane. This system is involved in N-acetylgalactosamine transport. In Escherichia coli (strain K12), this protein is Putative N-acetylgalactosamine permease IIC component 2 (agaW).